Reading from the N-terminus, the 249-residue chain is Probable phosphatase VVA0289 (249 aa).

The Zn(2+) site is built by H8, H10, H16, H41, E74, H102, H132, D194, and H196.

It belongs to the PHP family. Zn(2+) serves as cofactor.

This Vibrio vulnificus (strain YJ016) protein is Probable phosphatase VVA0289.